Consider the following 168-residue polypeptide: Large ribosomal subunit protein uL24 (168 aa).

The tract at residues 112 to 168 (LEGKDPRKQPKEAPKAAEKPAKEEPKKETPKAEEKPAKEEPKETKVEKKSEEKEDEN) is disordered.

Belongs to the universal ribosomal protein uL24 family. Part of the 50S ribosomal subunit.

Its function is as follows. One of two assembly initiator proteins, it binds directly to the 5'-end of the 23S rRNA, where it nucleates assembly of the 50S subunit. Located at the polypeptide exit tunnel on the outside of the subunit. This is Large ribosomal subunit protein uL24 from Nitrosopumilus maritimus (strain SCM1).